Consider the following 1240-residue polypeptide: DNA polymerase catalytic subunit (1240 aa).

Residues 1–22 (MFCAAGGPASPGGKPAARAASG) are compositionally biased toward low complexity. Disordered stretches follow at residues 1 to 44 (MFCA…RRQN), 646 to 695 (GLDK…RETG), and 1103 to 1139 (AAAPGDEPAPPAALPSPAKRPRETPSHADPPGGASKP). The span at 669–688 (NGDEDKDDDEDGDEDGDERE) shows a compositional bias: acidic residues.

Belongs to the DNA polymerase type-B family. Forms a complex with the ssDNA-binding protein UL29, the DNA polymerase processivity factor, and the alkaline exonuclease. Interacts with the putative helicase-primase complex subunit UL8; this interaction may coordinate leading and lagging strand DNA synthesis at the replication fork.

The protein localises to the host nucleus. It catalyses the reaction DNA(n) + a 2'-deoxyribonucleoside 5'-triphosphate = DNA(n+1) + diphosphate. The enzyme catalyses Endonucleolytic cleavage to 5'-phosphomonoester.. Replicates viral genomic DNA. The replication complex is composed of six viral proteins: the DNA polymerase, processivity factor, primase, primase-associated factor, helicase, and ssDNA-binding protein. Additionally, the polymerase contains an intrinsic ribonuclease H (RNase H) activity that specifically degrades RNA/DNA heteroduplexes or duplex DNA substrates in the 5' to 3' direction. Therefore, it can catalyze the excision of the RNA primers that initiate the synthesis of Okazaki fragments at a replication fork during viral DNA replication. This Human herpesvirus 2 (strain HG52) (HHV-2) protein is DNA polymerase catalytic subunit.